The following is a 55-amino-acid chain: Large ribosomal subunit protein bL33 (55 aa).

Belongs to the bacterial ribosomal protein bL33 family.

The chain is Large ribosomal subunit protein bL33 from Hamiltonella defensa subsp. Acyrthosiphon pisum (strain 5AT).